Consider the following 250-residue polypeptide: Anti-sigma-L factor RslA (250 aa).

Residues 1–115 (MTMPLRGLGP…VHRRRRRTRL (115 aa)) are Cytoplasmic-facing. A helical transmembrane segment spans residues 116 to 136 (ITWVASSAAAAVLAIGVLVGV). Over 137–250 (QGHSAAPQRA…TGQVLLQRSL (114 aa)) the chain is Extracellular.

As to quaternary structure, interacts with ECF RNA polymerase sigma factor SigL; this should inhibit the interaction of SigL with the RNA polymerase catalytic core. In terms of processing, probably cleaved within the membrane by Rip1 near the cytoplasmic membrane interface.

Its subcellular location is the cell membrane. Functionally, an anti-sigma factor for extracytoplasmic function (ECF) sigma factor SigL. ECF sigma factors are held in an inactive form by an anti-sigma factor until released by regulated intramembrane proteolysis (RIP). RIP occurs when an extracytoplasmic signal triggers a concerted proteolytic cascade to transmit information and elicit cellular responses. The membrane-spanning regulatory substrate protein is first cut extracytoplasmically (site-1 protease, S1P), then within the membrane itself (site-2 protease, S2P, Rip1), while cytoplasmic proteases finish degrading the regulatory protein, liberating the sigma factor. This chain is Anti-sigma-L factor RslA (rslA), found in Mycobacterium tuberculosis (strain ATCC 35801 / TMC 107 / Erdman).